The chain runs to 214 residues: Redox-sensing transcriptional repressor Rex (214 aa).

Residues 18 to 57 constitute a DNA-binding region (H-T-H motif); the sequence is LYYRLVNQLHEKGIDRVNSKTISEALDIDSASIRRDFSYF. NAD(+) is bound at residue 92–97; the sequence is GVGNLG.

Belongs to the transcriptional regulatory Rex family. As to quaternary structure, homodimer.

Its subcellular location is the cytoplasm. Modulates transcription in response to changes in cellular NADH/NAD(+) redox state. In Staphylococcus carnosus (strain TM300), this protein is Redox-sensing transcriptional repressor Rex.